Here is a 30-residue protein sequence, read N- to C-terminus: uncharacterized protein (30 aa).

Residues 1 to 30 (MHLSTLPNVPWPNRSFTTKRPPLPNMSFSW) are disordered.

This is an uncharacterized protein from Saccharomyces cerevisiae (strain ATCC 204508 / S288c) (Baker's yeast).